Reading from the N-terminus, the 206-residue chain is Small ribosomal subunit protein uS4 (206 aa).

Positions 96 to 156 (GRLDNVVYRM…EKSKKQARIK (61 aa)) constitute an S4 RNA-binding domain.

This sequence belongs to the universal ribosomal protein uS4 family. In terms of assembly, part of the 30S ribosomal subunit. Contacts protein S5. The interaction surface between S4 and S5 is involved in control of translational fidelity.

One of the primary rRNA binding proteins, it binds directly to 16S rRNA where it nucleates assembly of the body of the 30S subunit. In terms of biological role, with S5 and S12 plays an important role in translational accuracy. In Pasteurella multocida (strain Pm70), this protein is Small ribosomal subunit protein uS4.